Here is a 451-residue protein sequence, read N- to C-terminus: MNDDIKTVTVYPTTLELTTPTKSANGSNDDYDPHQHRELKNPTTNFQTFAHFLKASVGTGVLAMPSAFAHAGYVNGTLLTLIIGSLALYCLHILIKCMYILCKRQRVPYVSFSQAMNLGLKQGPPWLRCLAPIAVPFVDGFLAFYHFGICCVYVVFIAESIKQLVDEYLVVWDVRIHMCIIIVPLLLIYSIKNLKLLAPFSSAANLLLLVGFGIILYYIFEELPPLSERDPFVAAGKLPTFFGTVLFALEAVGVILAIEENMATPKSFVGPCGILNSGMSIVLGLYVLLGFFGYWKYGNESEGSITLNIPQSEIPAQVVKVFFAITTWISYALQGYVTAHILWDKYLAKRFKETRQTFYELIFRAIIVLLTFGCAVAIPDLSVFLSLVGSFCLSILGLIFPVLLQICVQYTEGYGPFRIKLIINLLLLCFGIFGGVVGTYVSILDIIAVYK.

Topologically, residues 1 to 48 are cytoplasmic; sequence MNDDIKTVTVYPTTLELTTPTKSANGSNDDYDPHQHRELKNPTTNFQT. Residues 49–69 traverse the membrane as a helical segment; that stretch reads FAHFLKASVGTGVLAMPSAFA. Residues 70–80 are Extracellular-facing; the sequence is HAGYVNGTLLT. Residue N75 is glycosylated (N-linked (GlcNAc...) asparagine). The chain crosses the membrane as a helical span at residues 81 to 101; that stretch reads LIIGSLALYCLHILIKCMYIL. Residues 102 to 136 are Cytoplasmic-facing; it reads CKRQRVPYVSFSQAMNLGLKQGPPWLRCLAPIAVP. The chain crosses the membrane as a helical span at residues 137–157; the sequence is FVDGFLAFYHFGICCVYVVFI. The Extracellular segment spans residues 158–167; it reads AESIKQLVDE. Residues 168–188 traverse the membrane as a helical segment; the sequence is YLVVWDVRIHMCIIIVPLLLI. Topologically, residues 189-199 are cytoplasmic; the sequence is YSIKNLKLLAP. A helical membrane pass occupies residues 200 to 220; that stretch reads FSSAANLLLLVGFGIILYYIF. At 221–237 the chain is on the extracellular side; that stretch reads EELPPLSERDPFVAAGK. A helical transmembrane segment spans residues 238–258; sequence LPTFFGTVLFALEAVGVILAI. Residues 259-272 are Cytoplasmic-facing; sequence EENMATPKSFVGPC. A helical membrane pass occupies residues 273–293; sequence GILNSGMSIVLGLYVLLGFFG. Over 294–320 the chain is Extracellular; it reads YWKYGNESEGSITLNIPQSEIPAQVVK. N299 is a glycosylation site (N-linked (GlcNAc...) asparagine). A helical transmembrane segment spans residues 321 to 341; it reads VFFAITTWISYALQGYVTAHI. Residues 342-357 lie on the Cytoplasmic side of the membrane; the sequence is LWDKYLAKRFKETRQT. A helical membrane pass occupies residues 358-378; the sequence is FYELIFRAIIVLLTFGCAVAI. Topologically, residues 379-382 are extracellular; the sequence is PDLS. Residues 383–403 form a helical membrane-spanning segment; that stretch reads VFLSLVGSFCLSILGLIFPVL. Residues 404-420 are Cytoplasmic-facing; sequence LQICVQYTEGYGPFRIK. A helical membrane pass occupies residues 421–441; the sequence is LIINLLLLCFGIFGGVVGTYV. Topologically, residues 442 to 451 are extracellular; the sequence is SILDIIAVYK.

The protein belongs to the amino acid/polyamine transporter 2 family. Expressed in the proximal and distal regions of the midgut; expressed in enterocytes and progenitor cells. Expression increases in response to intestinal bacterial infection and spreads further into the midgut, eventually covering the entire midgut.

Its subcellular location is the cell membrane. It localises to the late endosome membrane. The protein resides in the lysosome membrane. The protein localises to the basal cell membrane. In terms of biological role, amino acid transporter which has pH-dependent electrogenic transport activity for alanine, glycine and proline. Plays a role in positive regulation of growth by directly or indirectly modulating the effects of the TOR signaling pathway. Required in enterocytes for the efficient recovery of gut epithelium following the cytoplasmic purge response to bacterial infection. Acts cell-autonomously to promote the retrograde transport of amino acids into the intestinal epithelium. Acts non-cell-autonomously through the insulin signaling pathway to stimulate Myc expression and the release of amino acids from nutrient stores into the hemolymph. The chain is Proton-coupled amino acid transporter-like protein acs from Drosophila melanogaster (Fruit fly).